A 364-amino-acid chain; its full sequence is Paraneoplastic antigen Ma2 homolog (364 aa).

At A2 the chain carries N-acetylalanine. Residues E335–D353 are compositionally biased toward acidic residues. The interval E335–D364 is disordered. Residues G354 to D364 are compositionally biased toward gly residues.

This sequence belongs to the PNMA family.

Its subcellular location is the nucleus. The protein localises to the nucleolus. The sequence is that of Paraneoplastic antigen Ma2 homolog (PNMA2) from Macaca fascicularis (Crab-eating macaque).